Here is a 259-residue protein sequence, read N- to C-terminus: MDFLHLGSFVFSSRLILGTGKFSNADLMIEAIKASGAQLVTVALRRFNREQIADDLFGPLSALQGITLMPNTSGASTAREAIHAAHIARELSGSPFIKVEIHPNPQHLMPDALETWEASRILAKEGFLVMPYIPADPVLAKRLEEVGCASVMPLGSAIGSGQGLANAGMIELIIRESGIPVIVDAGLRAPSEAAAAMEMGCGAVLVNSAVAVAGNPPEMANAFAEAVRAGRRAFKAELMPKSSFALSTSPLTTFLGKKS.

Residue Lys98 is the Schiff-base intermediate with DXP of the active site. 1-deoxy-D-xylulose 5-phosphate-binding positions include Gly159, 185–186 (AG), and 207–208 (NS).

This sequence belongs to the ThiG family. In terms of assembly, homotetramer. Forms heterodimers with either ThiH or ThiS.

Its subcellular location is the cytoplasm. It carries out the reaction [ThiS sulfur-carrier protein]-C-terminal-Gly-aminoethanethioate + 2-iminoacetate + 1-deoxy-D-xylulose 5-phosphate = [ThiS sulfur-carrier protein]-C-terminal Gly-Gly + 2-[(2R,5Z)-2-carboxy-4-methylthiazol-5(2H)-ylidene]ethyl phosphate + 2 H2O + H(+). It participates in cofactor biosynthesis; thiamine diphosphate biosynthesis. Its function is as follows. Catalyzes the rearrangement of 1-deoxy-D-xylulose 5-phosphate (DXP) to produce the thiazole phosphate moiety of thiamine. Sulfur is provided by the thiocarboxylate moiety of the carrier protein ThiS. In vitro, sulfur can be provided by H(2)S. This chain is Thiazole synthase, found in Chlorobium phaeobacteroides (strain DSM 266 / SMG 266 / 2430).